Reading from the N-terminus, the 421-residue chain is Gamma-glutamyl phosphate reductase (421 aa).

This sequence belongs to the gamma-glutamyl phosphate reductase family.

It is found in the cytoplasm. The enzyme catalyses L-glutamate 5-semialdehyde + phosphate + NADP(+) = L-glutamyl 5-phosphate + NADPH + H(+). It participates in amino-acid biosynthesis; L-proline biosynthesis; L-glutamate 5-semialdehyde from L-glutamate: step 2/2. Catalyzes the NADPH-dependent reduction of L-glutamate 5-phosphate into L-glutamate 5-semialdehyde and phosphate. The product spontaneously undergoes cyclization to form 1-pyrroline-5-carboxylate. This chain is Gamma-glutamyl phosphate reductase, found in Nitrosospira multiformis (strain ATCC 25196 / NCIMB 11849 / C 71).